The following is a 1076-amino-acid chain: Histone deacetylase 4 (1076 aa).

The stretch at 66–169 (REQQLQQELL…GKESAVASTE (104 aa)) forms a coiled coil. Residues 117 to 312 (MLAMKHQQEL…NSSSGNVSTE (196 aa)) are interaction with MEF2A. The segment covering 132–162 (KLERHRQEQELEKQHREQKLQQLKNKEKGKE) has biased composition (basic and acidic residues). 3 disordered regions span residues 132–166 (KLER…SAVA), 205–225 (TQHS…ASYN), and 239–323 (PLRK…PSAP). Over residues 205–224 (TQHSSLDQSSPPQSGVSASY) the composition is skewed to polar residues. Ser209 bears the Phosphoserine mark. Ser245 carries the post-translational modification Phosphoserine; by CaMK4 and SIK1. The span at 258-273 (KVAERRSSPLLRRKDG) shows a compositional bias: basic and acidic residues. A compositionally biased stretch (low complexity) spans 289–310 (SACSSAPGSGPSSPNSSSGNVS). The PxLPxI/L motif; mediates interaction with ANKRA2 and 14-3-3 proteins motif lies at 348–353 (PSLPNI). Ser349 carries the phosphoserine modification. Phosphoserine; by CaMK4 and SIK1 is present on Ser465. Disordered stretches follow at residues 506-529 (ISKP…ELRE), 541-580 (RLPG…QRPA), and 622-645 (RPLS…EPPT). The span at 514-529 (RQPESHPEETEEELRE) shows a compositional bias: basic and acidic residues. A Glycyl lysine isopeptide (Lys-Gly) (interchain with G-Cter in SUMO) cross-link involves residue Lys556. At Ser562 the chain carries Phosphoserine. The segment covering 626-638 (RAQSSPASATFPM) has biased composition (polar residues). Ser629 carries the phosphoserine; by CaMK4 modification. Ser630 is modified (phosphoserine). The tract at residues 652-1076 (GLVYDTLMLK…EEPMEEEPPL (425 aa)) is histone deacetylase. Positions 664, 666, 672, and 743 each coordinate Zn(2+). The active site involves His795. The short motif at 1043–1076 (EEAETVTAMASLSVGVKPAEKRSEEEPMEEEPPL) is the Nuclear export signal element.

It belongs to the histone deacetylase family. HD type 2 subfamily. Homodimer. Homodimerization via its N-terminal domain. Interacts with HDAC7. Interacts with MEF2A, MEF2C, MEF2D, MORC2 and NR2C1. Interacts with a 14-3-3 chaperone proteins in a phosphorylation dependent manner. Interacts with 14-3-3 protein YWHAB. Interacts with BTBD14B. Interacts with KDM5B. Interacts (via PxLPxI/L motif) with ANKRA2 (via ankyrin repeats). Interacts with CUL7 (as part of the 3M complex); negatively regulated by ANKRA2. Interacts with EP300 in the presence of TFAP2C. Interacts with AHRR. Interacts with MYOCD. Interacts with HSPA1A and HSPA1B leading to their deacetylation at 'Lys-77'. Interacts with ZBTB7B; the interaction allows the recruitment of HDAC4 on CD8 loci for deacetylation and possible inhibition of CD8 genes expression. Interacts with DHX36. Interacts with SIK3; this interaction leads to HDAC4 retention in the cytoplasm. Interacts with ZNF638. In terms of processing, phosphorylated by CaMK4 at Ser-245, Ser-465 and Ser-629. Phosphorylation at other residues by CaMK2D is required for the interaction with 14-3-3. Phosphorylation at Ser-349, within the PxLPxI/L motif, impairs the binding of ANKRA2 but generates a high-affinity docking site for 14-3-3. Sumoylation on Lys-556 is promoted by the E3 SUMO-protein ligase RANBP2, and prevented by phosphorylation by CaMK4.

It is found in the nucleus. The protein resides in the cytoplasm. It carries out the reaction N(6)-acetyl-L-lysyl-[histone] + H2O = L-lysyl-[histone] + acetate. Responsible for the deacetylation of lysine residues on the N-terminal part of the core histones (H2A, H2B, H3 and H4). Histone deacetylation gives a tag for epigenetic repression and plays an important role in transcriptional regulation, cell cycle progression and developmental events. Histone deacetylases act via the formation of large multiprotein complexes. Involved in muscle maturation via its interaction with the myocyte enhancer factors such as MEF2A, MEF2C and MEF2D. Deacetylates HSPA1A and HSPA1A at 'Lys-77' leading to their preferential binding to co-chaperone STUB1. The polypeptide is Histone deacetylase 4 (Hdac4) (Mus musculus (Mouse)).